Here is a 774-residue protein sequence, read N- to C-terminus: 5-methyltetrahydropteroyltriglutamate--homocysteine methyltransferase (774 aa).

Residues 23 to 26 and lysine 123 contribute to the 5-methyltetrahydropteroyltri-L-glutamate site; that span reads RELK. L-homocysteine contacts are provided by residues 446 to 448 and glutamate 499; that span reads IGS. Residues 446–448 and glutamate 499 contribute to the L-methionine site; that span reads IGS. Residues 530-531 and tryptophan 576 contribute to the 5-methyltetrahydropteroyltri-L-glutamate site; that span reads RC. Position 614 (aspartate 614) interacts with L-homocysteine. Residue aspartate 614 coordinates L-methionine. Glutamate 620 is a binding site for 5-methyltetrahydropteroyltri-L-glutamate. Histidine 656, cysteine 658, and glutamate 680 together coordinate Zn(2+). The active-site Proton donor is histidine 709. Residue cysteine 741 coordinates Zn(2+).

This sequence belongs to the vitamin-B12 independent methionine synthase family. It depends on Zn(2+) as a cofactor.

The enzyme catalyses 5-methyltetrahydropteroyltri-L-glutamate + L-homocysteine = tetrahydropteroyltri-L-glutamate + L-methionine. The protein operates within amino-acid biosynthesis; L-methionine biosynthesis via de novo pathway; L-methionine from L-homocysteine (MetE route): step 1/1. Functionally, catalyzes the transfer of a methyl group from 5-methyltetrahydrofolate to homocysteine resulting in methionine formation. The polypeptide is 5-methyltetrahydropteroyltriglutamate--homocysteine methyltransferase (Aliivibrio fischeri (strain ATCC 700601 / ES114) (Vibrio fischeri)).